The chain runs to 976 residues: Receptor-like protein 14 (976 aa).

Residues 1–26 form the signal peptide; that stretch reads MERKVFSGQNLIWVMLLLVQLRGYKC. At 27 to 928 the chain is on the extracellular side; that stretch reads CIEKERKALL…DDDDEAAIDM (902 aa). N-linked (GlcNAc...) asparagine glycosylation is found at Asn-60, Asn-75, Asn-98, Asn-112, Asn-151, Asn-185, and Asn-200. LRR repeat units follow at residues 105 to 127, 137 to 160, 162 to 185, 186 to 209, 210 to 233, 234 to 258, 260 to 283, 284 to 306, 308 to 331, 333 to 358, 359 to 381, 382 to 405, 407 to 428, 429 to 452, 454 to 477, 478 to 501, and 503 to 528; these read FEELRSLNLSGEIYNEFNGLFDD, LRNLEILDLSSNSFNNSIFPFLNA, TSLTTLFIQSNYIGGPLPIKELKN, LTKLELLDLSRSGYNGSIPEFTHL, EKLKALDLSANDFSSLVELQELKV, LTNLEVLGLAWNHLDGPIPKEVFCE, KNLRQLDLRGNYFEGQLPVCLGNL, NKLRVLDLSSNQLSGNLPASFNS, ESLEYLSLSDNNFEGFFSLNPLAN, TKLKVFRLSSTSEMLQVETESNWLPK, FQLTVAALPFCSLGKIPNFLVYQ, TNLRLVDLSSNRLSGDIPTWLLEN, PELKVLQLKNNSFTIFQIPTIV, HKLQVLDFSANDITGVLPDNIGHV, PRLLHMNGSHNGFQGNLPSSMGEM, NDISFLDLSYNNFSGELPRSLLTG, and FSLITLQLSHNSFSGPILPIQTRLTS. Residue Asn-331 is glycosylated (N-linked (GlcNAc...) asparagine). The N-linked (GlcNAc...) asparagine glycan is linked to Asn-416. N-linked (GlcNAc...) asparagine glycosylation is found at Asn-460 and Asn-489. Residues 530 to 549 form an LRR 18; degenerate repeat; it reads IVLRMHNNLFTGEIGVGLRT. 11 LRR repeats span residues 550–573, 575–599, 600–623, 625–645, 646–669, 671–692, 693–715, 782–805, 806–829, 831–854, and 856–879; these read LVNLSIFDASNNRLTGLISSSIPP, SSHLIMLLLSNNLLEGTLPPSLLAI, HHLNFLDLSGNLLSGDLPSSVVNS, YGIKIFLHNNSFTGPLPVTLL, ENAYILDLRNNKLSGSIPQFVNTG, MITLLLRGNNLTGSIPRKLCDL, TSIRLLDLSDNKLNGVIPPCLNH, LDYMYGLDLSSNELSGVIPAELGD, LSKLRALNLSRNLLSSSIPANFSK, KDIESLDLSYNMLQGNIPHQLTNL, and SLAVFNVSFNNLSGIIPQGGQFNT. Asn-552 carries an N-linked (GlcNAc...) asparagine glycan. A glycan (N-linked (GlcNAc...) asparagine) is linked at Asn-633. Asn-680 is a glycosylation site (N-linked (GlcNAc...) asparagine). Residues Asn-813, Asn-826, Asn-853, Asn-861, and Asn-866 are each glycosylated (N-linked (GlcNAc...) asparagine). Residues 897–922 are disordered; it reads DRSCEGKKNTKEADNGGEEEEEDDDD. Positions 898–910 are enriched in basic and acidic residues; that stretch reads RSCEGKKNTKEAD. A compositionally biased stretch (acidic residues) spans 911–922; that stretch reads NGGEEEEEDDDD. Residues 929–949 form a helical membrane-spanning segment; it reads VVLYWTTGSTYAIALIGILVL. At 950 to 976 the chain is on the cytoplasmic side; the sequence is MCFDCPWRRTWLCIVDAFIASGKSMFS.

The protein belongs to the RLP family.

Its subcellular location is the cell membrane. The protein is Receptor-like protein 14 of Arabidopsis thaliana (Mouse-ear cress).